Reading from the N-terminus, the 467-residue chain is Probable citrate synthase 2, mitochondrial (467 aa).

Catalysis depends on residues His303, His349, and Asp404.

This sequence belongs to the citrate synthase family. As to quaternary structure, homodimer.

Its subcellular location is the mitochondrion matrix. It carries out the reaction oxaloacetate + acetyl-CoA + H2O = citrate + CoA + H(+). It functions in the pathway carbohydrate metabolism; tricarboxylic acid cycle; isocitrate from oxaloacetate: step 1/2. The protein is Probable citrate synthase 2, mitochondrial of Aedes aegypti (Yellowfever mosquito).